Reading from the N-terminus, the 285-residue chain is 4-hydroxybenzoate octaprenyltransferase (285 aa).

Helical transmembrane passes span 28–48 (LWAL…CIFF), 86–106 (IAAW…FALI), 110–130 (NSLT…YPFF), 133–153 (FFAI…PMAF), 160–180 (VPLV…AYDT), 207–227 (VAAI…AGVM), 232–252 (WPYW…YTLI), and 262–284 (AAFR…AYAI).

It belongs to the UbiA prenyltransferase family. The cofactor is Mg(2+).

It is found in the cell inner membrane. The enzyme catalyses all-trans-octaprenyl diphosphate + 4-hydroxybenzoate = 4-hydroxy-3-(all-trans-octaprenyl)benzoate + diphosphate. It functions in the pathway cofactor biosynthesis; ubiquinone biosynthesis. Functionally, catalyzes the prenylation of para-hydroxybenzoate (PHB) with an all-trans polyprenyl group. Mediates the second step in the final reaction sequence of ubiquinone-8 (UQ-8) biosynthesis, which is the condensation of the polyisoprenoid side chain with PHB, generating the first membrane-bound Q intermediate 3-octaprenyl-4-hydroxybenzoate. The chain is 4-hydroxybenzoate octaprenyltransferase from Cupriavidus pinatubonensis (strain JMP 134 / LMG 1197) (Cupriavidus necator (strain JMP 134)).